Consider the following 421-residue polypeptide: Voltage-dependent calcium channel gamma-8 subunit (421 aa).

4 helical membrane passes run 19–39, 127–147, 157–177, and 207–227; these read VQVL…TIAI, SSIF…CVAA, IILG…IGVI, and FGGL…NIYI. Phosphoserine occurs at positions 251 and 254. The disordered stretch occupies residues 271 to 304; it reads RRSRSSSRGSSEASPSRDASPGGPGGPGFASTDI. The span at 276–287 shows a compositional bias: low complexity; it reads SSRGSSEASPSR. Residues 318-338 traverse the membrane as a helical segment; that stretch reads VAAGLASAGGGGGGAGVGAYG. Disordered stretches follow at residues 342–363 and 378–421; these read GAAG…GFLT and VTVT…TTPV. The span at 384–397 shows a compositional bias: pro residues; the sequence is PAAPAPAPPAPAAP. Residues 408-421 are compositionally biased toward polar residues; the sequence is ASNTNTLNRKTTPV.

Belongs to the PMP-22/EMP/MP20 family. CACNG subfamily. As to quaternary structure, interacts with CACNA1C. Identified in a complex with the L-type calcium channel subunits CACNA1C, CACNA2D1 and either CACNB1 or CACNB2. Acts as an auxiliary subunit for AMPA-selective glutamate receptors (AMPARs). Found in a complex with GRIA1, GRIA2, GRIA3, GRIA4, CNIH2, CNIH3, CACNG2, CACNG3, CACNG4, CACNG5 and CACNG7. Interacts with CNIH2. Found in a complex with GRIA1, GRIA2, GRIA3, GRIA4, DLG4 and CNIH2. In terms of processing, palmitoylated. Probably palmitoylated by ZDHHC3 and ZDHHC7.

It localises to the cell membrane. The protein resides in the postsynaptic density membrane. In terms of biological role, regulates the activity of L-type calcium channels that contain CACNA1C as pore-forming subunit. Regulates the trafficking and gating properties of AMPA-selective glutamate receptors (AMPARs). Promotes their targeting to the cell membrane and synapses and modulates their gating properties by slowing their rates of activation, deactivation and desensitization and by mediating their resensitization. Does not show subunit-specific AMPA receptor regulation and regulates all AMPAR subunits. Thought to stabilize the calcium channel in an inactivated (closed) state. This chain is Voltage-dependent calcium channel gamma-8 subunit, found in Rattus norvegicus (Rat).